The sequence spans 45 residues: Small polypeptide DEVIL 2 (45 aa).

The interval 14–45 (SQSRRLGKYLKEQKGRIYIIRRCVMMLLCSHD) is required for DVL/RTFL small polypeptide activity. Residues 17–33 (RRLGKYLKEQKGRIYII) traverse the membrane as a helical segment.

Belongs to the DVL/RTFL small polypeptides family. In terms of tissue distribution, mostly expressed in stems and, to a lower extent, in roots and leaves.

It is found in the cell membrane. Its function is as follows. Small polypeptide acting as a regulatory molecule which coordinates cellular responses required for differentiation, growth and development, including leaves shape, pedicule elongation, inflorescence organization and fruit maturation, probably by restricting polar cell proliferation in lateral organs and coordinating socket cell recruitment and differentiation at trichome sites. The chain is Small polypeptide DEVIL 2 from Arabidopsis thaliana (Mouse-ear cress).